The chain runs to 200 residues: Late embryogenesis abundant protein 19 (200 aa).

Disordered regions lie at residues 1 to 145 (MASH…KTGS) and 172 to 200 (TEDE…ARDH). 5 stretches are compositionally biased toward basic and acidic residues: residues 13–23 (GETKAHTEEKA), 30–42 (SKDK…DRAS), 53–81 (QDTK…KDKT), 88–97 (ARDKAAESKD), and 105–114 (EKTEQAKQKA). Positions 52 to 81 (GQDTKEATKEKAQAAKERASETAQAAKDKT) form a coiled coil. Composition is skewed to low complexity over residues 115–130 (AETA…ETAQ) and 186–200 (TSAT…ARDH).

It belongs to the LEA type 4 family.

In terms of biological role, involved in response to stress. This is Late embryogenesis abundant protein 19 from Oryza sativa subsp. japonica (Rice).